The following is a 345-amino-acid chain: D-fructose 1,6-bisphosphatase class 2/sedoheptulose 1,7-bisphosphatase (345 aa).

Residues D33, E57, D97, and E100 each contribute to the Mn(2+) site. Residues 100–102 (EGT), Y131, 176–178 (RPR), and 198–200 (DGD) each bind substrate. E225 contacts Mn(2+).

Belongs to the FBPase class 2 family. As to quaternary structure, homotetramer. Requires Mn(2+) as cofactor.

It catalyses the reaction beta-D-fructose 1,6-bisphosphate + H2O = beta-D-fructose 6-phosphate + phosphate. It carries out the reaction D-sedoheptulose 1,7-bisphosphate + H2O = D-sedoheptulose 7-phosphate + phosphate. The protein operates within carbohydrate biosynthesis; Calvin cycle. Its function is as follows. Catalyzes the hydrolysis of fructose 1,6-bisphosphate (Fru 1,6-P2) and sedoheptulose 1,7-bisphosphate (Sed 1,7-P2) to fructose 6-phosphate and sedoheptulose 7-phosphate, respectively. In Synechocystis sp. (strain ATCC 27184 / PCC 6803 / Kazusa), this protein is D-fructose 1,6-bisphosphatase class 2/sedoheptulose 1,7-bisphosphatase.